A 79-amino-acid chain; its full sequence is Small ribosomal subunit protein bS18 (79 aa).

Belongs to the bacterial ribosomal protein bS18 family. In terms of assembly, part of the 30S ribosomal subunit. Forms a tight heterodimer with protein bS6.

Functionally, binds as a heterodimer with protein bS6 to the central domain of the 16S rRNA, where it helps stabilize the platform of the 30S subunit. The polypeptide is Small ribosomal subunit protein bS18 (Streptococcus suis (strain 98HAH33)).